Reading from the N-terminus, the 26-residue chain is Delta-conotoxin Am2766 (26 aa).

Cystine bridges form between cysteine 1–cysteine 16, cysteine 8–cysteine 20, and cysteine 15–cysteine 24. Residue glutamate 26 is modified to Glutamic acid 1-amide.

As to expression, expressed by the venom duct.

The protein resides in the secreted. In terms of biological role, delta-conotoxins bind to site 6 of voltage-gated sodium channels (Nav) and inhibit the inactivation process. In Conus amadis (Amadis cone), this protein is Delta-conotoxin Am2766.